Consider the following 179-residue polypeptide: Laminin-binding fimbrial subunit ElfA (179 aa).

The N-terminal stretch at 1–21 (MKKSVLTAFITVVCATSSVMA) is a signal peptide.

Belongs to the fimbrial protein family.

The protein localises to the fimbrium. Its function is as follows. Part of the elfADCG fimbrial operon, which could be required for adherence to host epithelial cells. ElfA is an accessory colonization factor that contributes to adherence of bacteria to human intestinal epithelial cells and to animal intestinal tissue in vitro. Binds specifically to laminin, but not to fibronectin or collagen type IV. This chain is Laminin-binding fimbrial subunit ElfA (elfA), found in Escherichia coli O157:H7.